The primary structure comprises 344 residues: Phosphate acyltransferase (344 aa).

It belongs to the PlsX family. Homodimer. Probably interacts with PlsY.

It localises to the cytoplasm. It catalyses the reaction a fatty acyl-[ACP] + phosphate = an acyl phosphate + holo-[ACP]. It participates in lipid metabolism; phospholipid metabolism. In terms of biological role, catalyzes the reversible formation of acyl-phosphate (acyl-PO(4)) from acyl-[acyl-carrier-protein] (acyl-ACP). This enzyme utilizes acyl-ACP as fatty acyl donor, but not acyl-CoA. The polypeptide is Phosphate acyltransferase (Erwinia tasmaniensis (strain DSM 17950 / CFBP 7177 / CIP 109463 / NCPPB 4357 / Et1/99)).